The primary structure comprises 772 residues: MIENNKEITLDIIKLLPKAELHRHLDGSIRISTLLELAKEQNVELPTYDQNELAKLIHKDENCSGLVNFLEAFQYTCSVLQHAYAITRVFYEMCEDAVADGVSYLEIRFSPVLHTSFGLSLSEVMEAVCDGMAIAELNLPIKARIIVCGLRHLDPSISKDLAEITWRYRHKGAIAFDLAGPEDGFSSKHHKEAFSIIRNKGINCTLHSGEDSNWTSVADSIHHCGAHRIGHGIAIQQNEELLNHVVNRRIPIECCITSNYQIKAISNASEHPIRKYFDSGAIVSICCDNCTMSNITLSGEYKLAIDTFNFKVEEVIRLIDYSFASSFIDPPLKINIRRESFKKALKIFQTNGYDISGVIENKFYYFEEIGLDVELEIQNNLANNFSLGKNVIRNYPQITLELLENLPKSDLHCRFDGGVSIEQIWNEVQLLGIDKCEKSKQEFLKKLSSKHLACYANFKDFKEFKSLIQSSSHTPQTIRLSKEIINLLLQTPEQINRAFDDIIKVALKDKVQYLELMIRPNSHSRNGLTKEQVLALIIENKDKWEKSSSIKIGLVVFSSSTSDDPIETLDSARLAIANRNSGVIGFGIFGADPISPTESRHFSQTFSLLKENNFNLVQFAGKSDVESLISTIHCSGSTRLSGAFQSHKIPRLMSYLGNYSIPVEISLTEKLKSFTSDDLSFTTPIRHLLDGKCPVVICSFRSSLYPYSRSKMYYKIVKNAKLDFKQVVRLLKNPFAYNFQSHQQRIELVQQFNKLSKEYLNSVNINYSNIII.

H22 and H24 together coordinate Zn(2+). Substrate contacts are provided by H24, D26, and G180. Position 207 (H207) interacts with Zn(2+). E210 serves as the catalytic Proton donor. D288 provides a ligand contact to Zn(2+).

It belongs to the metallo-dependent hydrolases superfamily. Adenosine and AMP deaminases family. Requires Zn(2+) as cofactor.

It carries out the reaction adenosine + H2O + H(+) = inosine + NH4(+). Functionally, catalyzes the hydrolytic deamination of adenosine. Plays an important role in purine metabolism and in adenosine homeostasis, and may thereby contribute to cellular signaling events. The sequence is that of Probable adenosine deaminase (ada) from Dictyostelium discoideum (Social amoeba).